The chain runs to 331 residues: Putative heme-binding peroxidase (331 aa).

The Proton acceptor role is filled by His-50. His-174 is a binding site for heme b. Trp-190 (tryptophan radical intermediate) is an active-site residue. Residues 288-331 (INTDNQKGGYRSAPKKSDSTPATSGQPGASKTGGCPVMHHKAKL) form a disordered region. A compositionally biased stretch (polar residues) spans 306-316 (STPATSGQPGA).

The protein belongs to the peroxidase family. Cytochrome c peroxidase subfamily. It depends on heme b as a cofactor.

Its function is as follows. Destroys radicals which are normally produced within the cells and which are toxic to biological systems. This chain is Putative heme-binding peroxidase, found in Gibberella zeae (strain ATCC MYA-4620 / CBS 123657 / FGSC 9075 / NRRL 31084 / PH-1) (Wheat head blight fungus).